We begin with the raw amino-acid sequence, 563 residues long: Arginine--tRNA ligase (563 aa).

Positions 121–131 (PNIAKPMSMGH) match the 'HIGH' region motif.

The protein belongs to the class-I aminoacyl-tRNA synthetase family. Monomer.

The protein resides in the cytoplasm. It carries out the reaction tRNA(Arg) + L-arginine + ATP = L-arginyl-tRNA(Arg) + AMP + diphosphate. This Leuconostoc citreum (strain KM20) protein is Arginine--tRNA ligase.